The primary structure comprises 561 residues: Potassium-transporting ATPase potassium-binding subunit (561 aa).

11 helical membrane passes run 5 to 25 (IELFTMIAIIVLLTKPLGTYM), 63 to 83 (KYALTFLLVNMVMMIITYFIL), 103 to 122 (LAFNTVISFMTNTNLQHYAG), 133 to 153 (IVIVFLMFTSAASGLVTAAAI), 179 to 199 (LLPISMLATLILVWQGVPQTF), 255 to 275 (IEMLLMMLLPTSLIYTYGLMI), 281 to 301 (ALVLYISLFVIFILLAVGAVY), 380 to 400 (AGLQNIIMYTILTVFLTGLMV), 418 to 438 (LIALAILVHPFLILFSSALTV), 485 to 505 (IMTGLVMFFGRYITIILMLAV), and 531 to 551 (AIFIAVVLIVGALTFFPAVIL).

This sequence belongs to the KdpA family. The system is composed of three essential subunits: KdpA, KdpB and KdpC.

The protein localises to the cell membrane. Part of the high-affinity ATP-driven potassium transport (or Kdp) system, which catalyzes the hydrolysis of ATP coupled with the electrogenic transport of potassium into the cytoplasm. This subunit binds the extracellular potassium ions and delivers the ions to the membrane domain of KdpB through an intramembrane tunnel. The protein is Potassium-transporting ATPase potassium-binding subunit of Caldanaerobacter subterraneus subsp. tengcongensis (strain DSM 15242 / JCM 11007 / NBRC 100824 / MB4) (Thermoanaerobacter tengcongensis).